Reading from the N-terminus, the 125-residue chain is Small ribosomal subunit protein eS8 (125 aa).

Basic residues predominate over residues 1-23 (MQFQGRSRRKYTGAKLKSARGKR). The interval 1 to 34 (MQFQGRSRRKYTGAKLKSARGKRKFELGREPAAT) is disordered.

This sequence belongs to the eukaryotic ribosomal protein eS8 family. Part of the 30S ribosomal subunit.

This chain is Small ribosomal subunit protein eS8, found in Methanococcoides burtonii (strain DSM 6242 / NBRC 107633 / OCM 468 / ACE-M).